We begin with the raw amino-acid sequence, 118 residues long: Small integral membrane protein 17 (118 aa).

The tract at residues 1-84 (MQSLRPEQTR…DDESEGSQGF (84 aa)) is disordered. Residues 13–42 (LEPERTKTLLPRESRAWEKPPHPACTKDWE) are compositionally biased toward basic and acidic residues. A helical transmembrane segment spans residues 96–116 (IVLVVCVLFLFLVLTGMPMMF).

The protein localises to the membrane. This Homo sapiens (Human) protein is Small integral membrane protein 17 (SMIM17).